The primary structure comprises 217 residues: Large ribosomal subunit protein uL1 (217 aa).

A Phosphotyrosine modification is found at Tyr-11. N6-acetyllysine occurs at positions 91 and 106. Lys-118 is subject to N6-acetyllysine; alternate. Lys-118 participates in a covalent cross-link: Glycyl lysine isopeptide (Lys-Gly) (interchain with G-Cter in SUMO1); alternate. Lys-118 participates in a covalent cross-link: Glycyl lysine isopeptide (Lys-Gly) (interchain with G-Cter in SUMO2); alternate. Residue Lys-161 forms a Glycyl lysine isopeptide (Lys-Gly) (interchain with G-Cter in SUMO2) linkage.

It belongs to the universal ribosomal protein uL1 family. In terms of assembly, component of the large ribosomal subunit.

The protein resides in the cytoplasm. Its function is as follows. Component of the large ribosomal subunit. The ribosome is a large ribonucleoprotein complex responsible for the synthesis of proteins in the cell. The chain is Large ribosomal subunit protein uL1 (RPL10A) from Oryctolagus cuniculus (Rabbit).